A 273-amino-acid polypeptide reads, in one-letter code: 4-hydroxy-tetrahydrodipicolinate reductase (273 aa).

Residues 12-17 and glutamate 38 each bind NAD(+); that span reads GAGGRM. NADP(+) is bound at residue arginine 39. NAD(+) is bound by residues 102-104 and 126-129; these read GTT and AANF. Histidine 159 serves as the catalytic Proton donor/acceptor. Residue histidine 160 coordinates (S)-2,3,4,5-tetrahydrodipicolinate. The Proton donor role is filled by lysine 163. 169–170 provides a ligand contact to (S)-2,3,4,5-tetrahydrodipicolinate; it reads GT.

This sequence belongs to the DapB family. Homotetramer.

It localises to the cytoplasm. It catalyses the reaction (S)-2,3,4,5-tetrahydrodipicolinate + NAD(+) + H2O = (2S,4S)-4-hydroxy-2,3,4,5-tetrahydrodipicolinate + NADH + H(+). It carries out the reaction (S)-2,3,4,5-tetrahydrodipicolinate + NADP(+) + H2O = (2S,4S)-4-hydroxy-2,3,4,5-tetrahydrodipicolinate + NADPH + H(+). It functions in the pathway amino-acid biosynthesis; L-lysine biosynthesis via DAP pathway; (S)-tetrahydrodipicolinate from L-aspartate: step 4/4. Catalyzes the conversion of 4-hydroxy-tetrahydrodipicolinate (HTPA) to tetrahydrodipicolinate. This Salmonella gallinarum (strain 287/91 / NCTC 13346) protein is 4-hydroxy-tetrahydrodipicolinate reductase.